The following is a 92-amino-acid chain: Small ribosomal subunit protein uS19c (92 aa).

The protein belongs to the universal ribosomal protein uS19 family.

It localises to the plastid. It is found in the chloroplast. In terms of biological role, protein S19 forms a complex with S13 that binds strongly to the 16S ribosomal RNA. The protein is Small ribosomal subunit protein uS19c of Lemna minor (Common duckweed).